We begin with the raw amino-acid sequence, 248 residues long: Probable transcriptional regulatory protein Desal_2886 (248 aa).

Residues 1–21 form a disordered region; that stretch reads MAGHSKWANIQHRKGRQDAKR.

It belongs to the TACO1 family.

It localises to the cytoplasm. The protein is Probable transcriptional regulatory protein Desal_2886 of Maridesulfovibrio salexigens (strain ATCC 14822 / DSM 2638 / NCIMB 8403 / VKM B-1763) (Desulfovibrio salexigens).